We begin with the raw amino-acid sequence, 531 residues long: Peptide chain release factor 3 (531 aa).

The 270-residue stretch at 13-282 (SKRRTFAIIS…GLTQWAPSPM (270 aa)) folds into the tr-type G domain. GTP contacts are provided by residues 22 to 29 (SHPDAGKT), 90 to 94 (DTPGH), and 144 to 147 (NKLD).

This sequence belongs to the TRAFAC class translation factor GTPase superfamily. Classic translation factor GTPase family. PrfC subfamily.

The protein resides in the cytoplasm. Its function is as follows. Increases the formation of ribosomal termination complexes and stimulates activities of RF-1 and RF-2. It binds guanine nucleotides and has strong preference for UGA stop codons. It may interact directly with the ribosome. The stimulation of RF-1 and RF-2 is significantly reduced by GTP and GDP, but not by GMP. This Vibrio cholerae serotype O1 (strain ATCC 39541 / Classical Ogawa 395 / O395) protein is Peptide chain release factor 3.